Reading from the N-terminus, the 346-residue chain is Uroporphyrinogen decarboxylase (346 aa).

Substrate-binding positions include 21-25 (RQAGR), D71, Y146, S201, and H316.

The protein belongs to the uroporphyrinogen decarboxylase family. Homodimer.

It localises to the cytoplasm. It catalyses the reaction uroporphyrinogen III + 4 H(+) = coproporphyrinogen III + 4 CO2. The protein operates within porphyrin-containing compound metabolism; protoporphyrin-IX biosynthesis; coproporphyrinogen-III from 5-aminolevulinate: step 4/4. In terms of biological role, catalyzes the decarboxylation of four acetate groups of uroporphyrinogen-III to yield coproporphyrinogen-III. The polypeptide is Uroporphyrinogen decarboxylase (Rickettsia massiliae (strain Mtu5)).